Here is a 385-residue protein sequence, read N- to C-terminus: D-alanyl-D-alanine-carboxypeptidase/endopeptidase AmpH (385 aa).

A signal peptide spans 1-21 (MKRSLLFSAVLCAASLTSVHA).

Belongs to the beta-lactamase family.

The protein localises to the cell inner membrane. Its activity is regulated as follows. Inhibited by cefmetazole. Hydrolyzes the cross-linked dimers tetrapentapeptide (D45) and tetratetrapeptide (D44). Removes the terminal D-alanine from muropeptides and disaccharide pentapeptide M5 with a C-terminal D-Ala-D-Ala dipeptide. Associated with recycling and remodeling of peptidoglycan (PG). This chain is D-alanyl-D-alanine-carboxypeptidase/endopeptidase AmpH (ampH), found in Escherichia coli O157:H7.